Here is a 357-residue protein sequence, read N- to C-terminus: CCN family member 3 (357 aa).

Residues 1–31 (MQSVQSTSFCLRKQCLCLTFLLLHLLGQVAA) form the signal peptide. Residues 32-105 (TQRCPPQCPG…SNQTGICTAV (74 aa)) enclose the IGFBP N-terminal domain. Intrachain disulfides connect C35–C61, C39–C63, C43–C64, C50–C67, C75–C89, and C81–C102. The N-linked (GlcNAc...) asparagine glycan is linked to N97. One can recognise a VWFC domain in the interval 108–174 (DNCVFDGVIY…GECCEKWICG (67 aa)). Residues 205 to 250 (NCIEQTTEWTACSKSCGMGFSTRVTNRNRQCEMLKQTRLCMVRPCE) enclose the TSP type-1 domain. C244 carries S-palmitoyl cysteine lipidation. 5 cysteine pairs are disulfide-bonded: C264–C301, C281–C315, C292–C331, C295–C333, and C300–C337. A CTCK domain is found at 264–338 (CLRTKKSLKA…GTCTCHTNCP (75 aa)). N-linked (GlcNAc...) asparagine glycosylation occurs at N280.

This sequence belongs to the CCN family. Interacts with FBLN1. Interacts (via CTCK domain) with NOTCH1 (via the EGF-like repeat region). Interacts with GJA1/CX43. Interacts with ITGA5:ITGB1, ITGAV:ITGB3 and ITGAV:ITGB5. Interacts with ZDHHC22; the interaction may lead to CCN3 palmitoylation. Post-translationally, may be palmitoylated on Cys-244, which is important for extracellular secretion. Expressed in endothelial cells (at protein level). Expressed in bone marrow and thymic cells.

The protein localises to the secreted. The protein resides in the cytoplasm. It is found in the cell junction. It localises to the gap junction. In terms of biological role, immediate-early protein playing a role in various cellular processes including proliferation, adhesion, migration, differentiation and survival. Acts by binding to integrins or membrane receptors such as NOTCH1. Essential regulator of hematopoietic stem and progenitor cell function. Inhibits myogenic differentiation through the activation of Notch-signaling pathway. Inhibits vascular smooth muscle cells proliferation by increasing expression of cell-cycle regulators such as CDKN2B or CDKN1A independently of TGFB1 signaling. Ligand of integrins ITGAV:ITGB3 and ITGA5:ITGB1, acts directly upon endothelial cells to stimulate pro-angiogenic activities and induces angiogenesis. In endothelial cells, supports cell adhesion, induces directed cell migration (chemotaxis) and promotes cell survival. Also plays a role in cutaneous wound healing acting as integrin receptor ligand. Supports skin fibroblast adhesion through ITGA5:ITGB1 and ITGA6:ITGB1 and induces fibroblast chemotaxis through ITGAV:ITGB5. Seems to enhance bFGF-induced DNA synthesis in fibroblasts. Involved in bone regeneration as a negative regulator. Enhances the articular chondrocytic phenotype, whereas it repressed the one representing endochondral ossification. Impairs pancreatic beta-cell function, inhibits beta-cell proliferation and insulin secretion. Plays a role as negative regulator of endothelial pro-inflammatory activation reducing monocyte adhesion, its anti-inflammatory effects occur secondary to the inhibition of NF-kappaB signaling pathway. Contributes to the control and coordination of inflammatory processes in atherosclerosis. Attenuates inflammatory pain through regulation of IL1B- and TNF-induced MMP9, MMP2 and CCL2 expression. Inhibits MMP9 expression through ITGB1 engagement. Brain osteoanabolic hormone. Drives osteogenesis in osteochondral skeletal stem cells. During lactation, maintains the maternal skeleton and viability of offspring. In Homo sapiens (Human), this protein is CCN family member 3.